A 320-amino-acid polypeptide reads, in one-letter code: MARCDVLVSADWAESNLHAPKVVFVEVDEDTSAYDRDHIAGAIKLDWRTDLQDPVKRDFVDAQQFSKLLSERGIANEDTVILYGGNNNWFAAYAYWYFKLYGHEKVKLLDGGRKKWELDGRPLSSDPVSRPVTSYTASPPDNTIRAFRDEVLAAINVKNLIDVRSPDEFSGKILAPAHLPQEQSQRPGHIPGAINVPWSRAANEDGTFKSDEELAKLYADAGLDNSKETIAYCRIGERSSHTWFVLRELLGHQNVNIAFGYGPHACPASAYSRMCLTTFFTSLTQRFPQLQLARPFEDLERRGKGLHSVGIKELLVTWPT.

2 consecutive Rhodanese domains span residues 18-125 (HAPK…PLSS) and 154-267 (AINV…HACP). The active-site Cysteine persulfide intermediate is Cys233. Residue Arg238 participates in substrate binding.

The catalysed reaction is thiosulfate + hydrogen cyanide = thiocyanate + sulfite + 2 H(+). Functionally, may be a sulfotransferase involved in the formation of thiosulfate. The polypeptide is Putative thiosulfate sulfurtransferase 2 (cysA2) (Mycobacterium bovis (strain ATCC BAA-935 / AF2122/97)).